A 234-amino-acid polypeptide reads, in one-letter code: N-(5'-phosphoribosyl)anthranilate isomerase (234 aa).

Positions 211-234 are disordered; the sequence is RAASSSPRPVDGESPAFQRSEKAG.

This sequence belongs to the TrpF family.

It carries out the reaction N-(5-phospho-beta-D-ribosyl)anthranilate = 1-(2-carboxyphenylamino)-1-deoxy-D-ribulose 5-phosphate. The protein operates within amino-acid biosynthesis; L-tryptophan biosynthesis; L-tryptophan from chorismate: step 3/5. In Afipia carboxidovorans (strain ATCC 49405 / DSM 1227 / KCTC 32145 / OM5) (Oligotropha carboxidovorans), this protein is N-(5'-phosphoribosyl)anthranilate isomerase.